We begin with the raw amino-acid sequence, 148 residues long: Large ribosomal subunit protein uL22 (148 aa).

Belongs to the universal ribosomal protein uL22 family. In terms of assembly, part of the 50S ribosomal subunit.

Functionally, this protein binds specifically to 23S rRNA; its binding is stimulated by other ribosomal proteins, e.g. L4, L17, and L20. It is important during the early stages of 50S assembly. It makes multiple contacts with different domains of the 23S rRNA in the assembled 50S subunit and ribosome. Its function is as follows. The globular domain of the protein is located near the polypeptide exit tunnel on the outside of the subunit, while an extended beta-hairpin is found that lines the wall of the exit tunnel in the center of the 70S ribosome. This Thermosipho africanus (strain TCF52B) protein is Large ribosomal subunit protein uL22.